The following is a 566-amino-acid chain: Malate synthase, glyoxysomal (566 aa).

Arg179 functions as the Proton acceptor in the catalytic mechanism. Catalysis depends on Asp465, which acts as the Proton donor. The short motif at 564–566 (SRL) is the Microbody targeting signal element.

It belongs to the malate synthase family.

The protein localises to the glyoxysome. The catalysed reaction is glyoxylate + acetyl-CoA + H2O = (S)-malate + CoA + H(+). It functions in the pathway carbohydrate metabolism; glyoxylate cycle; (S)-malate from isocitrate: step 2/2. The polypeptide is Malate synthase, glyoxysomal (MLS) (Raphanus sativus (Radish)).